A 146-amino-acid polypeptide reads, in one-letter code: Peptide methionine sulfoxide reductase MsrB (146 aa).

Positions 6–129 (SAEAIAKLSA…NSASLRFVPK (124 aa)) constitute a MsrB domain. Cysteine 118 acts as the Nucleophile in catalysis.

This sequence belongs to the MsrB Met sulfoxide reductase family.

It catalyses the reaction L-methionyl-[protein] + [thioredoxin]-disulfide + H2O = L-methionyl-(R)-S-oxide-[protein] + [thioredoxin]-dithiol. This chain is Peptide methionine sulfoxide reductase MsrB, found in Brucella melitensis biotype 1 (strain ATCC 23456 / CCUG 17765 / NCTC 10094 / 16M).